Here is a 418-residue protein sequence, read N- to C-terminus: Serine/threonine transporter SstT (418 aa).

Helical transmembrane passes span 21–41 (ILIG…AAIA), 49–69 (FVGA…IASI), 83–103 (ILFL…VVSF), 142–162 (ALLN…GIAL), 190–210 (FAPL…GFGA), 217–237 (LLVV…PLIV), 299–319 (MAGA…TLGI), and 331–351 (VVAA…LLLI).

Belongs to the dicarboxylate/amino acid:cation symporter (DAACS) (TC 2.A.23) family.

The protein resides in the cell inner membrane. It carries out the reaction L-serine(in) + Na(+)(in) = L-serine(out) + Na(+)(out). It catalyses the reaction L-threonine(in) + Na(+)(in) = L-threonine(out) + Na(+)(out). Involved in the import of serine and threonine into the cell, with the concomitant import of sodium (symport system). This is Serine/threonine transporter SstT from Yersinia pseudotuberculosis serotype O:1b (strain IP 31758).